The chain runs to 463 residues: Tryptophan aminotransferase-related protein 4 (463 aa).

The helical transmembrane segment at 6–26 (LLLIVSIILNLVFTIHILYYS) threads the bilayer. Pyridoxal 5'-phosphate contacts are provided by residues Tyr-124, 163–164 (TT), Asn-239, 259–262 (DYAY), 282–285 (SLSK), and Arg-293. Lys-285 bears the N6-(pyridoxal phosphate)lysine mark.

It belongs to the alliinase family. It depends on pyridoxal 5'-phosphate as a cofactor.

The protein localises to the membrane. Probable aminotransferase. In Arabidopsis thaliana (Mouse-ear cress), this protein is Tryptophan aminotransferase-related protein 4 (TAR4).